Reading from the N-terminus, the 1206-residue chain is STE20-like serine/threonine-protein kinase (1206 aa).

A Phosphoserine modification is found at Ser14. In terms of domain architecture, Protein kinase spans 34-292; the sequence is WEIIGELGDG…TSQLLQHPFV (259 aa). Residues 40 to 48 and Lys63 each bind ATP; that span reads LGDGAFGKV. Residue Asp155 is the Proton acceptor of the active site. The residue at position 183 (Thr183) is a Phosphothreonine. Position 189 is a phosphoserine (Ser189). Residues 308 to 352 are disordered; the sequence is KAEVTEEVEDGKEEDDDDETESALPIPANKRASSDLSIASSEEDK. Residues 312-328 show a composition bias toward acidic residues; the sequence is TEEVEDGKEEDDDDETE. A phosphoserine mark is found at Ser340, Ser341, Ser344, Ser347, Ser348, Ser354, and Ser372. A disordered region spans residues 364–440; that stretch reads SERTEHNTSG…ESQPDTEDQQ (77 aa). Basic and acidic residues-rich tracts occupy residues 381–395 and 420–429; these read LSEKPTPEGPEKTVD and ENGREKKRPQ. Residues 468–492 are a coiled coil; that stretch reads EEDRNEENQEIIENKLTQSEEIKDI. 2 disordered regions span residues 515–761 and 773–792; these read DNEV…SSSD and TKDSGSVSLQETRRQKKTLK. Positions 520-536 are enriched in basic and acidic residues; that stretch reads FTKEETQEKLGKDDKTH. Phosphoserine occurs at positions 545 and 563. A compositionally biased stretch (polar residues) spans 556 to 565; that stretch reads TQKSAEQSQD. Residues 584–609 are compositionally biased toward basic and acidic residues; sequence KATEGPEAHGAEEEPRSGERVEDKQL. Residues 634–643 show a composition bias toward acidic residues; the sequence is EEPETDEVDQ. 3 positions are modified to phosphoserine: Ser645, Ser649, and Ser668. Low complexity predominate over residues 691–702; that stretch reads AEPQAPAASQAS. Over residues 747–757 the composition is skewed to polar residues; sequence TDSGTGSTVEN. 2 positions are modified to phosphoserine: Ser776 and Ser778. Thr813 bears the Phosphothreonine mark. A Phosphoserine modification is found at Ser817. A coiled-coil region spans residues 825-1037; sequence LRRQELRELR…LKNRQTQERA (213 aa). A UVR domain is found at 874–909; that stretch reads DQEIENLEKQQKQTIERLEQEHTNRLRDEAKRIKGE. Residue Thr1065 is modified to Phosphothreonine. A coiled-coil region spans residues 1077-1151; that stretch reads AAQEEKRQKN…ELKEWREKLR (75 aa). The span at 1079–1099 shows a compositional bias: basic and acidic residues; that stretch reads QEEKRQKNERMAQHQKHESQM. Disordered stretches follow at residues 1079-1100 and 1181-1206; these read QEEKRQKNERMAQHQKHESQMR and LNPSAQSRGCLQTSHPSSTRAPAWAG. The segment covering 1181-1200 has biased composition (polar residues); sequence LNPSAQSRGCLQTSHPSSTR.

This sequence belongs to the protein kinase superfamily. STE Ser/Thr protein kinase family. STE20 subfamily. Post-translationally, proteolytically cleaved by caspase-3. Autophosphorylated.

It is found in the cytoplasm. It catalyses the reaction L-seryl-[protein] + ATP = O-phospho-L-seryl-[protein] + ADP + H(+). It carries out the reaction L-threonyl-[protein] + ATP = O-phospho-L-threonyl-[protein] + ADP + H(+). In terms of biological role, mediates apoptosis and actin stress fiber dissolution. The chain is STE20-like serine/threonine-protein kinase (Slk) from Rattus norvegicus (Rat).